The chain runs to 727 residues: NADH-ubiquinone oxidoreductase 75 kDa subunit, mitochondrial (727 aa).

Residues 1–23 (MLRIPVRKALVGLSKSPKGCVRT) constitute a mitochondrion transit peptide. The 2Fe-2S ferredoxin-type domain occupies 30-108 (NLIEVFVDGQ…GWNILTNSEK (79 aa)). [2Fe-2S] cluster-binding residues include cysteine 64, cysteine 75, and cysteine 78. Position 84 is an N6-acetyllysine (lysine 84). Cysteine 92 is a [2Fe-2S] cluster binding site. The region spanning 108 to 147 (KSKKAREGVMELLLANHPLDCPICDQGGECDLQDQSMMFG) is the 4Fe-4S His(Cys)3-ligated-type domain. Histidine 124, cysteine 128, cysteine 131, cysteine 137, cysteine 176, cysteine 179, cysteine 182, and cysteine 226 together coordinate [4Fe-4S] cluster. The region spanning 245–301 (TRKTESIDVMDAVGSNIVVSTRTGEVMRILPRMHEDINEEWISDKTRFAYDGLKRQR) is the 4Fe-4S Mo/W bis-MGD-type domain. Residues lysine 467, lysine 499, and lysine 709 each carry the N6-acetyllysine modification.

This sequence belongs to the complex I 75 kDa subunit family. In terms of assembly, core subunit of respiratory chain NADH dehydrogenase (Complex I) which is composed of 45 different subunits. This is the largest subunit of complex I and it is a component of the iron-sulfur (IP) fragment of the enzyme. Complex I associates with ubiquinol-cytochrome reductase complex (Complex III) to form supercomplexes. Interacts with MDM2 and AKAP1. Requires [2Fe-2S] cluster as cofactor. [4Fe-4S] cluster is required as a cofactor.

It is found in the mitochondrion inner membrane. It carries out the reaction a ubiquinone + NADH + 5 H(+)(in) = a ubiquinol + NAD(+) + 4 H(+)(out). Core subunit of the mitochondrial membrane respiratory chain NADH dehydrogenase (Complex I) which catalyzes electron transfer from NADH through the respiratory chain, using ubiquinone as an electron acceptor. Essential for catalysing the entry and efficient transfer of electrons within complex I. Plays a key role in the assembly and stability of complex I and participates in the association of complex I with ubiquinol-cytochrome reductase complex (Complex III) to form supercomplexes. In Pongo abelii (Sumatran orangutan), this protein is NADH-ubiquinone oxidoreductase 75 kDa subunit, mitochondrial (NDUFS1).